A 367-amino-acid chain; its full sequence is tRNA uridine(34) hydroxylase (367 aa).

Residues 159–249 (EDKNSIVVDV…GIISYAHEIS (91 aa)) enclose the Rhodanese domain. Cysteine 213 functions as the Cysteine persulfide intermediate in the catalytic mechanism.

This sequence belongs to the TrhO family.

It carries out the reaction uridine(34) in tRNA + AH2 + O2 = 5-hydroxyuridine(34) in tRNA + A + H2O. Its function is as follows. Catalyzes oxygen-dependent 5-hydroxyuridine (ho5U) modification at position 34 in tRNAs. This chain is tRNA uridine(34) hydroxylase, found in Leptospira borgpetersenii serovar Hardjo-bovis (strain L550).